A 292-amino-acid polypeptide reads, in one-letter code: [LysW]-aminoadipate kinase (292 aa).

Arg89 and Asn193 together coordinate substrate.

Belongs to the acetylglutamate kinase family. LysZ subfamily.

It localises to the cytoplasm. It catalyses the reaction [amino-group carrier protein]-C-terminal-N-(1,4-dicarboxybutan-1-yl)-L-glutamine + ATP = [amino-group carrier protein]-C-terminal-N-(1-carboxy-5-phosphooxy-5-oxopentan-1-yl)-L-glutamine + ADP. Its pathway is amino-acid biosynthesis; L-lysine biosynthesis via AAA pathway; L-lysine from L-alpha-aminoadipate (Thermus route): step 2/5. Functionally, catalyzes the phosphorylation of LysW-gamma-alpha-aminoadipate. The chain is [LysW]-aminoadipate kinase from Deinococcus radiodurans (strain ATCC 13939 / DSM 20539 / JCM 16871 / CCUG 27074 / LMG 4051 / NBRC 15346 / NCIMB 9279 / VKM B-1422 / R1).